The primary structure comprises 255 residues: Homeobox protein Hox-D4 (255 aa).

Residues 31–127 (EQGADYYGGG…PKQPPSGTAL (97 aa)) form a disordered region. Pro residues predominate over residues 94–107 (EPCPAPPAPPPAPL). The short motif at 133–138 (VYPWMK) is the Antp-type hexapeptide element. Residues 154–213 (PKRSRTAYTRQQVLELEKEFHFNRYLTRRRRIEIAHTLCLSERQIKIWFQNRRMKWKKDH) constitute a DNA-binding region (homeobox). The segment at 212-255 (DHKLPNTKGRSSSSSSSSSCSSSVAPSQHLQPMAKDHHTDLTTL) is disordered. Positions 222 to 234 (SSSSSSSSSCSSS) are enriched in low complexity. The segment covering 245 to 255 (AKDHHTDLTTL) has biased composition (basic and acidic residues).

The protein belongs to the Antp homeobox family. Deformed subfamily. In terms of assembly, forms a DNA-binding heterodimer with transcription factor PBX1.

It is found in the nucleus. In terms of biological role, sequence-specific transcription factor which is part of a developmental regulatory system that provides cells with specific positional identities on the anterior-posterior axis. In Homo sapiens (Human), this protein is Homeobox protein Hox-D4 (HOXD4).